The chain runs to 462 residues: cAMP-dependent protein kinase regulatory subunit (462 aa).

Residues 54-203 (TPSPRFPPSP…RLKYAIEGNF (150 aa)) are dimerization and phosphorylation. Residues 79-157 (FGANANPFGG…PTTDSYPAQY (79 aa)) are disordered. Residues 80 to 102 (GANANPFGGSSSNPNPFGGSASP) are compositionally biased toward low complexity. Residue Ser164 is modified to Phosphoserine. 3',5'-cyclic AMP is bound by residues 204 to 333 (LFSH…FLEE), Glu282, Arg291, 336 to 453 (ILSS…KTGV), Glu401, and Arg410.

The protein belongs to the cAMP-dependent kinase regulatory chain family. In terms of assembly, tetramer, composed of 2 regulatory (R) and 2 catalytic (C) subunits. In the presence of cAMP it dissociates into 2 active monomeric C subunits and an R dimer.

This is cAMP-dependent protein kinase regulatory subunit (pkar1) from Hypocrea atroviridis (Trichoderma atroviride).